A 363-amino-acid polypeptide reads, in one-letter code: Ribosome-binding ATPase YchF (363 aa).

The region spanning 3 to 256 (FKCGIVGLPN…LEDEEKVDFL (254 aa)) is the OBG-type G domain. Residue 12–17 (NVGKST) coordinates ATP. Residues S16 and T36 each coordinate Mg(2+). Positions 278–361 (NLQTYFTAGV…QDGDVMHFRF (84 aa)) constitute a TGS domain.

Belongs to the TRAFAC class OBG-HflX-like GTPase superfamily. OBG GTPase family. YchF/OLA1 subfamily. Mg(2+) serves as cofactor.

In terms of biological role, ATPase that binds to both the 70S ribosome and the 50S ribosomal subunit in a nucleotide-independent manner. This chain is Ribosome-binding ATPase YchF, found in Haemophilus ducreyi (strain 35000HP / ATCC 700724).